Reading from the N-terminus, the 322-residue chain is Thioredoxin reductase (322 aa).

FAD is bound by residues 12-15 (SGPA), 34-42 (EGAVTAGGA), Asn51, and Val84. Cysteines 136 and 139 form a disulfide. 4 residues coordinate NADP(+): His176, Arg182, Ile239, and Tyr259. FAD contacts are provided by residues Asp279 and 286 to 289 (RQAI). Residue Arg286 coordinates NADP(+).

It belongs to the class-II pyridine nucleotide-disulfide oxidoreductase family. As to quaternary structure, homodimer. The cofactor is FAD.

Its subcellular location is the cytoplasm. The catalysed reaction is [thioredoxin]-dithiol + NADP(+) = [thioredoxin]-disulfide + NADPH + H(+). The protein is Thioredoxin reductase of Streptomyces coelicolor (strain ATCC BAA-471 / A3(2) / M145).